Reading from the N-terminus, the 76-residue chain is Protein OPG128 (76 aa).

Cysteine 17 and cysteine 21 form a disulfide bridge.

Belongs to the orthopoxvirus OPG128 family. In terms of assembly, interacts with sulfhydryl oxidase OPG072; this interaction involves formation of a transient disulfide-bonded intermediate, allowing disulfide bond transfer. Interacts with OPG088; this interaction involves formation of a transient disulfide-bonded intermediate, allowing disulfide bond transfer.

Functionally, late protein which probably participates in disulfide bond formation by functioning as a thiol-disulfide transfer protein between membrane-associated OPG072 and OPG08. The complete pathway for formation of disulfide bonds in intracellular virion membrane proteins sequentially involves oxidation of OPG072, OPG128 and OPG08. The chain is Protein OPG128 (OPG128) from Homo sapiens (Human).